A 380-amino-acid polypeptide reads, in one-letter code: Growth-regulating factor 4 (380 aa).

The tract at residues 1–21 is disordered; the sequence is MDLQLKQWRSQQQNESEEQGS. The region spanning 82-117 is the QLQ domain; sequence FFSWAQWQELELQALIYRYMLAGASVPQELLLPIKK. The WRC domain occupies 151–195; it reads DPEPGRCKRTDGKKWRCSRDVVAGHKYCDRHIHRGRNRSRKPVET. 2 short sequence motifs (bipartite nuclear localization signal) span residues 156–166 and 184–191; these read RCKRTDGKKWR and RGRNRSRK. Disordered stretches follow at residues 222 to 270 and 284 to 330; these read NNNH…GRSD and RSSD…NMRN. Low complexity-rich tracts occupy residues 228-245 and 285-296; these read SSGS…SCSS and SSDSTSSPMSSS. Residues 297 to 320 are compositionally biased toward polar residues; the sequence is TCHLSISMPGNNTSSDVSLKLSTG.

This sequence belongs to the GRF family. Strongly expressed in actively growing and developing tissues, such as roots, upper stems, and shoot tips containing the shoot apical meristem (SAM) and flower buds. Also expressed in mature flowers, but weakly expressed in mature stems and leaves.

It is found in the nucleus. Functionally, transcription activator that plays a role in the regulation of cell expansion in leaf and cotyledons tissues. Component of a network formed by miR396, the GRFs and their interacting factors (GIFs) acting in the regulation of meristem function, at least partially through the control of cell proliferation. The protein is Growth-regulating factor 4 (GRF4) of Arabidopsis thaliana (Mouse-ear cress).